Here is a 559-residue protein sequence, read N- to C-terminus: Germacrene A synthase (559 aa).

The Mg(2+) site is built by D312, D316, D456, T460, and E464. Positions 312–316 (DDTYD) match the DDXXD motif motif.

It belongs to the terpene synthase family. As to quaternary structure, monomer. The cofactor is Mg(2+). Expressed in glandular trichomes of all aerial tissues, with highest levels in tissues accumulating parthenolide (e.g. flowers and, to some extent, leaves).

The enzyme catalyses (2E,6E)-farnesyl diphosphate = (+)-(R)-germacrene A + diphosphate. It functions in the pathway secondary metabolite biosynthesis; terpenoid biosynthesis. Its function is as follows. Sesquiterpene synthase involved in germacrene A biosynthesis. Germacrene A is a precursor of several sesquiterpene lactones. The polypeptide is Germacrene A synthase (Tanacetum parthenium (Feverfew)).